Here is a 226-residue protein sequence, read N- to C-terminus: Protein FMP52, mitochondrial (226 aa).

This sequence belongs to the FMP52 family.

The protein localises to the mitochondrion outer membrane. The chain is Protein FMP52, mitochondrial (FMP52) from Debaryomyces hansenii (strain ATCC 36239 / CBS 767 / BCRC 21394 / JCM 1990 / NBRC 0083 / IGC 2968) (Yeast).